The primary structure comprises 1020 residues: X-linked retinitis pigmentosa GTPase regulator (1020 aa).

RCC1 repeat units follow at residues 54 to 105 (NKLY…STEG), 106 to 158 (GNVY…LTED), 159 to 208 (GRLF…VTTD), 209 to 261 (GELY…LTEN), 262 to 313 (AVYT…ITDI), and 314 to 367 (GLMY…FAAP). 2 positions are modified to phosphoserine: serine 418 and serine 518. Disordered regions lie at residues 609–776 (HENN…IISK), 790–906 (EIPE…KEKA), and 989–1020 (DNKDADQNHMSQNHQNIPPTNTERRSKSCTIL). Composition is skewed to basic and acidic residues over residues 618–636 (LDAKEIEKESDGGHSQKES), 644–665 (EKETKLAEIAGMKDLREREKST), 685–698 (EENKDFVKKRESCK), 704–715 (DSERESVEKPDS), 760–771 (KLIEQGNEKETK), 790–802 (EIPEEKEGAEDSK), 816–853 (ENVKVHGGRKEKTEILSDDLTDKAEDHEFSKTEELKLE), and 883–906 (SKTEGAERTNDDSSAETIEKKEKA). Positions 996-1009 (NHMSQNHQNIPPTN) are enriched in polar residues. Cysteine 1017 carries the cysteine methyl ester modification. The S-geranylgeranyl cysteine moiety is linked to residue cysteine 1017. The propeptide at 1018–1020 (TIL) is removed in mature form.

In terms of assembly, interacts with SPATA7. Interacts with CEP290. Interacts with WHRN. Interacts with PDE6D. Interacts with RPGRIP1. Interacts with RPGRIP1L. PDE6D, RPGRIP1 and RPGRIP1L may compete for the same binding sites. Interacts with RAB37 and RAB8A (in GDP-bound forms); functions as GEF for RAB37 and RAB8A. Isoform 6 interacts with NPM1 (via C-terminus). Isoform 6 interacts with SMC1A and SMC3. Prenylated. In terms of tissue distribution, heart, brain, placenta, lung, liver, muscle, kidney, retina, pancreas and fetal retinal pigment epithelium. Isoform 3 is found only in the retina. Colocalizes with RPGRIP1 in the outer segment of rod photoreceptors and cone outer segments.

Its subcellular location is the cytoplasm. It localises to the cytoskeleton. It is found in the flagellum axoneme. The protein localises to the golgi apparatus. The protein resides in the cell projection. Its subcellular location is the cilium. It localises to the microtubule organizing center. It is found in the centrosome. The protein localises to the cilium basal body. The protein resides in the cilium axoneme. In terms of biological role, acts as a guanine-nucleotide releasing factor (GEF) for RAB8A and RAB37 by promoting the conversion of inactive RAB-GDP to the active form RAB-GTP. GEF activity towards RAB8A may facilitate ciliary trafficking by modulating ciliary intracellular localization of RAB8A. GEF activity towards RAB37 maintains autophagic homeostasis and retinal function. Involved in photoreceptor integrity. May control cilia formation by regulating actin stress filaments and cell contractility. May be involved in microtubule organization and regulation of transport in primary cilia. May play a critical role in spermatogenesis and in intraflagellar transport processes. The chain is X-linked retinitis pigmentosa GTPase regulator from Homo sapiens (Human).